The following is a 42-amino-acid chain: Photosystem I reaction center subunit IX (42 aa).

Residues Y7–I27 traverse the membrane as a helical segment.

It belongs to the PsaJ family.

The protein localises to the plastid. It is found in the chloroplast thylakoid membrane. Its function is as follows. May help in the organization of the PsaE and PsaF subunits. The sequence is that of Photosystem I reaction center subunit IX from Chaetosphaeridium globosum (Charophycean green alga).